The following is a 179-amino-acid chain: ATP synthase subunit delta (179 aa).

It belongs to the ATPase delta chain family. As to quaternary structure, F-type ATPases have 2 components, F(1) - the catalytic core - and F(0) - the membrane proton channel. F(1) has five subunits: alpha(3), beta(3), gamma(1), delta(1), epsilon(1). F(0) has three main subunits: a(1), b(2) and c(10-14). The alpha and beta chains form an alternating ring which encloses part of the gamma chain. F(1) is attached to F(0) by a central stalk formed by the gamma and epsilon chains, while a peripheral stalk is formed by the delta and b chains.

It is found in the cell membrane. F(1)F(0) ATP synthase produces ATP from ADP in the presence of a proton or sodium gradient. F-type ATPases consist of two structural domains, F(1) containing the extramembraneous catalytic core and F(0) containing the membrane proton channel, linked together by a central stalk and a peripheral stalk. During catalysis, ATP synthesis in the catalytic domain of F(1) is coupled via a rotary mechanism of the central stalk subunits to proton translocation. Its function is as follows. This protein is part of the stalk that links CF(0) to CF(1). It either transmits conformational changes from CF(0) to CF(1) or is implicated in proton conduction. The protein is ATP synthase subunit delta of Clostridium beijerinckii (strain ATCC 51743 / NCIMB 8052) (Clostridium acetobutylicum).